Consider the following 251-residue polypeptide: Coproheme decarboxylase (251 aa).

Fe-coproporphyrin III is bound by residues arginine 133, 147 to 151 (YPMSK), histidine 174, glutamine 187, and serine 225. The active site involves tyrosine 147.

Belongs to the ChdC family. Type 1 subfamily. Requires Fe-coproporphyrin III as cofactor.

It carries out the reaction Fe-coproporphyrin III + 2 H2O2 + 2 H(+) = heme b + 2 CO2 + 4 H2O. The enzyme catalyses Fe-coproporphyrin III + H2O2 + H(+) = harderoheme III + CO2 + 2 H2O. It catalyses the reaction harderoheme III + H2O2 + H(+) = heme b + CO2 + 2 H2O. The protein operates within porphyrin-containing compound metabolism; protoheme biosynthesis. Functionally, involved in coproporphyrin-dependent heme b biosynthesis. Catalyzes the decarboxylation of Fe-coproporphyrin III (coproheme) to heme b (protoheme IX), the last step of the pathway. The reaction occurs in a stepwise manner with a three-propionate intermediate. The sequence is that of Coproheme decarboxylase from Listeria welshimeri serovar 6b (strain ATCC 35897 / DSM 20650 / CCUG 15529 / CIP 8149 / NCTC 11857 / SLCC 5334 / V8).